Reading from the N-terminus, the 262-residue chain is Flap endonuclease Xni (262 aa).

Asp112 is a Mg(2+) binding site. The 5'-3' exonuclease domain maps to 171–258 (QQLNDYWAIT…GFNLKDLRYT (88 aa)). Ile179, Val190, and Ile193 together coordinate K(+). The tract at residues 192–197 (GIGSKG) is interaction with DNA.

It belongs to the Xni family. It depends on Mg(2+) as a cofactor. The cofactor is K(+).

Has flap endonuclease activity. During DNA replication, flap endonucleases cleave the 5'-overhanging flap structure that is generated by displacement synthesis when DNA polymerase encounters the 5'-end of a downstream Okazaki fragment. The chain is Flap endonuclease Xni from Psychromonas ingrahamii (strain DSM 17664 / CCUG 51855 / 37).